A 139-amino-acid polypeptide reads, in one-letter code: Ribulose bisphosphate carboxylase small subunit, chromosomal (139 aa).

This sequence belongs to the RuBisCO small chain family. In terms of assembly, heterohexadecamer of 8 large and 8 small subunits.

Functionally, ruBisCO catalyzes two reactions: the carboxylation of D-ribulose 1,5-bisphosphate, the primary event in carbon dioxide fixation, as well as the oxidative fragmentation of the pentose substrate. Both reactions occur simultaneously and in competition at the same active site. Although the small subunit is not catalytic it is essential for maximal activity. The chain is Ribulose bisphosphate carboxylase small subunit, chromosomal from Cupriavidus necator (Alcaligenes eutrophus).